Here is a 430-residue protein sequence, read N- to C-terminus: Histidine--tRNA ligase (430 aa).

This sequence belongs to the class-II aminoacyl-tRNA synthetase family. In terms of assembly, homodimer.

It localises to the cytoplasm. The enzyme catalyses tRNA(His) + L-histidine + ATP = L-histidyl-tRNA(His) + AMP + diphosphate + H(+). The protein is Histidine--tRNA ligase of Parasynechococcus marenigrum (strain WH8102).